Consider the following 392-residue polypeptide: MFQIGEALMGQGAELAHVDLMIGDKGGPVGQAFANGLTQLSVGHTPLLSVIRPNLPPKPSTLIIPKVTVKNMEQAGKIFGPAQAAVAKAVADSVEEGVISKDQVEEIVIVASVFIHPDAQDYNKIYRYNYGATKLAIKRALGGFPDINTVLEESNKSTHAIMGFKVTRLWDPPYLQVAFDNPDIEFVQSAISQIPKSDHVIIEAGTPLIKRYGMDVISRIREVRPDAFIVADLKTLDTGNLEARMVADAAGDAIVVSALAPISTIDKLIEEAHKTGIYAVMDTLNQQDPISVLKQLKVMPDVIELHRGIDIEATEHAWGNIAEIKKIAPKILVAVAGGVRLDKVPVALGQGADILVVGRAITNSKDVREVAEQFINSLNKPEIDQFRVMTDF.

A formaldehyde-activating enzyme region spans residues 1-161 (MFQIGEALMG…EESNKSTHAI (161 aa)). His17 serves as the catalytic Proton donor. Asp19, Leu48, Lys66, Thr68, and Gln83 together coordinate substrate. The 3-hexulose-6-phosphate synthase stretch occupies residues 162-392 (MGFKVTRLWD…IDQFRVMTDF (231 aa)).

This sequence in the N-terminal section; belongs to the formaldehyde-activating enzyme family. The protein in the C-terminal section; belongs to the HPS/KGPDC family. HPS subfamily.

It catalyses the reaction 5,6,7,8-tetrahydromethanopterin + formaldehyde = 5,10-methylenetetrahydromethanopterin + H2O. It carries out the reaction D-ribulose 5-phosphate + formaldehyde = D-arabino-hex-3-ulose 6-phosphate. It functions in the pathway carbohydrate biosynthesis; D-ribose 5-phosphate biosynthesis. In terms of biological role, catalyzes the condensation of formaldehyde with tetrahydromethanopterin (H(4)MPT) to 5,10-methylenetetrahydromethanopterin. Its function is as follows. Catalyzes the reversible formation of ribulose-5-phosphate and formaldehyde from 3-hexulose-6-phosphate. The polypeptide is Bifunctional enzyme Fae/Hps (Methanosarcina barkeri (strain Fusaro / DSM 804)).